The sequence spans 256 residues: Protein N-terminal and lysine N-methyltransferase EFM7 (256 aa).

The segment at 1 to 26 is disordered; sequence MSDTESLNDALGLFDEPEDFRPEKPK. Residues Trp64, 90–92, Asp112, Trp145, and Ser168 contribute to the S-adenosyl-L-methionine site; that span reads GAA.

It belongs to the class I-like SAM-binding methyltransferase superfamily. EFM7 family.

It localises to the cytoplasm. S-adenosyl-L-methionine-dependent protein methyltransferase that trimethylates the N-terminal glycine 'Gly-2' of elongation factor 1-alpha, before also catalyzing the mono- and dimethylation of 'Lys-3'. The sequence is that of Protein N-terminal and lysine N-methyltransferase EFM7 from Candida glabrata (strain ATCC 2001 / BCRC 20586 / JCM 3761 / NBRC 0622 / NRRL Y-65 / CBS 138) (Yeast).